We begin with the raw amino-acid sequence, 607 residues long: Elongation factor 4 (607 aa).

Residues glutamate 11–aspartate 193 enclose the tr-type G domain. Residues aspartate 23–threonine 28 and asparagine 140–aspartate 143 each bind GTP.

The protein belongs to the TRAFAC class translation factor GTPase superfamily. Classic translation factor GTPase family. LepA subfamily.

The protein resides in the cell membrane. The catalysed reaction is GTP + H2O = GDP + phosphate + H(+). Required for accurate and efficient protein synthesis under certain stress conditions. May act as a fidelity factor of the translation reaction, by catalyzing a one-codon backward translocation of tRNAs on improperly translocated ribosomes. Back-translocation proceeds from a post-translocation (POST) complex to a pre-translocation (PRE) complex, thus giving elongation factor G a second chance to translocate the tRNAs correctly. Binds to ribosomes in a GTP-dependent manner. The sequence is that of Elongation factor 4 from Staphylococcus epidermidis (strain ATCC 35984 / DSM 28319 / BCRC 17069 / CCUG 31568 / BM 3577 / RP62A).